The primary structure comprises 206 residues: Small ribosomal subunit protein uS4 (206 aa).

An S4 RNA-binding domain is found at 96-156; the sequence is SRLDNVVYRM…EKSKKQVRIA (61 aa).

Belongs to the universal ribosomal protein uS4 family. In terms of assembly, part of the 30S ribosomal subunit. Contacts protein S5. The interaction surface between S4 and S5 is involved in control of translational fidelity.

One of the primary rRNA binding proteins, it binds directly to 16S rRNA where it nucleates assembly of the body of the 30S subunit. In terms of biological role, with S5 and S12 plays an important role in translational accuracy. The chain is Small ribosomal subunit protein uS4 from Laribacter hongkongensis (strain HLHK9).